A 410-amino-acid chain; its full sequence is Multifunctional CCA protein (410 aa).

The ATP site is built by G8 and R11. 2 residues coordinate CTP: G8 and R11. Positions 21 and 23 each coordinate Mg(2+). Positions 91, 137, and 140 each coordinate ATP. Residues R91, R137, and R140 each contribute to the CTP site. The region spanning 228–329 (TGVHVLSVLQ…LELLQSFDVY (102 aa)) is the HD domain.

This sequence belongs to the tRNA nucleotidyltransferase/poly(A) polymerase family. Bacterial CCA-adding enzyme type 1 subfamily. Monomer. Can also form homodimers and oligomers. Mg(2+) is required as a cofactor. Ni(2+) serves as cofactor.

It carries out the reaction a tRNA precursor + 2 CTP + ATP = a tRNA with a 3' CCA end + 3 diphosphate. It catalyses the reaction a tRNA with a 3' CCA end + 2 CTP + ATP = a tRNA with a 3' CCACCA end + 3 diphosphate. Catalyzes the addition and repair of the essential 3'-terminal CCA sequence in tRNAs without using a nucleic acid template. Adds these three nucleotides in the order of C, C, and A to the tRNA nucleotide-73, using CTP and ATP as substrates and producing inorganic pyrophosphate. tRNA 3'-terminal CCA addition is required both for tRNA processing and repair. Also involved in tRNA surveillance by mediating tandem CCA addition to generate a CCACCA at the 3' terminus of unstable tRNAs. While stable tRNAs receive only 3'-terminal CCA, unstable tRNAs are marked with CCACCA and rapidly degraded. The protein is Multifunctional CCA protein of Pseudomonas aeruginosa (strain LESB58).